We begin with the raw amino-acid sequence, 383 residues long: Heme A synthase (383 aa).

Transmembrane regions (helical) follow at residues 38-58 (VRVWLMMLFGLVVIMIAVGGL), 127-147 (VIGLVWALGFFGFLVTRKIPP), 153-173 (LFLLGVLGGLQGAIGWWMVAS), 187-207 (LATHLGLAFFILGLIAWYIMV), 230-250 (ANWLMGLAAVQILLGALVAGI), 287-307 (LVQFNHRMVGYLLLLVGLYVW), 321-341 (AFDWVAVILFGQMVLGIVTVL), and 344-364 (APWTWAIAHQFGAVVTICLIL). Histidine 292 is a heme binding site. Heme is bound at residue histidine 352.

It belongs to the COX15/CtaA family. Type 2 subfamily. In terms of assembly, interacts with CtaB. It depends on heme b as a cofactor.

The protein localises to the cell membrane. It catalyses the reaction Fe(II)-heme o + 2 A + H2O = Fe(II)-heme a + 2 AH2. It functions in the pathway porphyrin-containing compound metabolism; heme A biosynthesis; heme A from heme O: step 1/1. In terms of biological role, catalyzes the conversion of heme O to heme A by two successive hydroxylations of the methyl group at C8. The first hydroxylation forms heme I, the second hydroxylation results in an unstable dihydroxymethyl group, which spontaneously dehydrates, resulting in the formyl group of heme A. The protein is Heme A synthase of Dinoroseobacter shibae (strain DSM 16493 / NCIMB 14021 / DFL 12).